The sequence spans 122 residues: Large ribosomal subunit protein uL14 (122 aa).

It belongs to the universal ribosomal protein uL14 family. In terms of assembly, part of the 50S ribosomal subunit. Forms a cluster with proteins L3 and L19. In the 70S ribosome, L14 and L19 interact and together make contacts with the 16S rRNA in bridges B5 and B8.

Its function is as follows. Binds to 23S rRNA. Forms part of two intersubunit bridges in the 70S ribosome. The polypeptide is Large ribosomal subunit protein uL14 (Lawsonia intracellularis (strain PHE/MN1-00)).